The chain runs to 357 residues: Sorbitol dehydrogenase (357 aa).

Residue Ala-2 is modified to N-acetylalanine. Cys-45 serves as a coordination point for Zn(2+). Position 51 (Tyr-51) interacts with substrate. Residues His-70 and Glu-71 each coordinate Zn(2+). Glu-156 serves as a coordination point for substrate. Ser-169 carries the phosphoserine modification. Residues Val-184, Asp-204, Arg-209, 273-275 (VGM), and 297-299 (VFR) contribute to the NAD(+) site. Arg-299 and Tyr-300 together coordinate substrate.

Belongs to the zinc-containing alcohol dehydrogenase family. In terms of assembly, homotetramer. Zn(2+) is required as a cofactor. As to expression, testis has the highest level of expression, followed by kidney, liver, and lung. Low levels of expression are also observed in lens, brain, and skeletal muscle. Expressed in sperm flagellum and very low expression in the sperm head.

The protein resides in the mitochondrion membrane. The protein localises to the cell projection. It is found in the cilium. It localises to the flagellum. The catalysed reaction is keto-D-fructose + NADH + H(+) = D-sorbitol + NAD(+). It carries out the reaction xylitol + NAD(+) = D-xylulose + NADH + H(+). It catalyses the reaction L-iditol + NAD(+) = keto-L-sorbose + NADH + H(+). With respect to regulation, inhibited in vitro by p-hydroxymercuribenzoate, EDTA, l,l0-phenanthroline and N-ethylmaleimide. Its function is as follows. Polyol dehydrogenase that catalyzes the reversible NAD(+)-dependent oxidation of various sugar alcohols. Is active with D-sorbitol (D-glucitol) leading to the C2-oxidized product D-fructose. Is a key enzyme in the polyol pathway that interconverts glucose and fructose via sorbitol, which constitutes an important alternate route for glucose metabolism. May play a role in sperm motility by using sorbitol as an alternative energy source for sperm motility and protein tyrosine phosphorylation. Has no activity on ethanol. Cannot use NADP(+) as the electron acceptor. This chain is Sorbitol dehydrogenase (Sord), found in Mus musculus (Mouse).